Here is a 38-residue protein sequence, read N- to C-terminus: Large ribosomal subunit protein bL36 (38 aa).

Belongs to the bacterial ribosomal protein bL36 family.

The sequence is that of Large ribosomal subunit protein bL36 from Kosmotoga olearia (strain ATCC BAA-1733 / DSM 21960 / TBF 19.5.1).